Reading from the N-terminus, the 439-residue chain is MASLTVKAYLLGKEEAAREIRRFSFCFSPEPEAEAAAGPGPCERLLSRVAVLFPALRPGGFQAHYRDEDGDLVAFSSDEELTMAMSYVKDDIFRIYIKEKKECRREHRPPCAQEARSMVHPNVICDGCNGPVVGTRYKCSVCPDYDLCSVCEGKGLHREHSKLIFPNPFGHLSDSFSHSRWLRKLKHGHFGWPGWEMGPPGNWSPRPPRAGDGRPCPTAESASAPSEDPNVNFLKNVGESVAAALSPLGIEVDIDVEHGGKRSRLTPTSAESSSTGTEDKSGTQPSSCSSEVSKPDGAGEGPAQSLTEQMKKIALESVGQPEELMESDNCSGGDDDWTHLSSKEVDPSTGELQSLQMPESEGPSSLDPSQEGPTGLKEAALYPHLPPEADPRLIESLSQMLSMGFSDEGGWLTRLLQTKNYDIGAALDTIQYSKHPPPL.

N-acetylalanine is present on Ala2. An interaction with LCK region spans residues 2–48 (ASLTVKAYLLGKEEAAREIRRFSFCFSPEPEAEAAAGPGPCERLLSR). The PB1 domain occupies 3–100 (SLTVKAYLLG…DIFRIYIKEK (98 aa)). Phosphoserine is present on Ser24. The interval 41–105 (PCERLLSRVA…YIKEKKECRR (65 aa)) is interaction with PRKCZ and dimerization. Residues 48–78 (RVAVLFPALRPGGFQAHYRDEDGDLVAFSSD) form an interaction with PAWR region. The interval 119-221 (VHPNVICDGC…DGRPCPTAES (103 aa)) is interaction with GABRR3. The ZZ-type zinc finger occupies 120 to 170 (HPNVICDGCNGPVVGTRYKCSVCPDYDLCSVCEGKGLHREHSKLIFPNPFG). Zn(2+)-binding residues include Cys125, Cys128, Cys139, and Cys142. Position 145 is a phosphotyrosine (Tyr145). The Zn(2+) site is built by Cys148, Cys151, His157, and His160. The tract at residues 167-217 (NPFGHLSDSFSHSRWLRKLKHGHFGWPGWEMGPPGNWSPRPPRAGDGRPCP) is LIM protein-binding. Phosphoserine is present on residues Ser173, Ser175, and Ser204. A disordered region spans residues 201–231 (GNWSPRPPRAGDGRPCPTAESASAPSEDPNV). Residues 225–230 (PSEDPN) carry the TRAF6-binding motif. Residues Ser246 and Ser263 each carry the phosphoserine modification. Positions 259 to 389 (GGKRSRLTPT…ALYPHLPPEA (131 aa)) are disordered. Residues 265–292 (LTPTSAESSSTGTEDKSGTQPSSCSSEV) are compositionally biased toward polar residues. Thr266 is subject to Phosphothreonine. An interaction with NTRK1 region spans residues 266–439 (TPTSAESSST…IQYSKHPPPL (174 aa)). Phosphoserine is present on residues Ser269 and Ser281. Cys288 is lipidated: S-palmitoyl cysteine. Residues Ser305, Ser327, and Ser331 each carry the phosphoserine modification. An MAP1LC3B-binding region spans residues 320-341 (QPEELMESDNCSGGDDDWTHLS). The LIR motif lies at 335–340 (DDWTHL). Basic and acidic residues predominate over residues 336 to 346 (DWTHLSSKEVD). The tract at residues 346–351 (DPSTGE) is interaction with KEAP1. Phosphoserine is present on residues Ser348, Ser354, Ser360, Ser364, and Ser365. A compositionally biased stretch (polar residues) spans 350–372 (GELQSLQMPESEGPSSLDPSQEG). In terms of domain architecture, UBA spans 388–433 (EADPRLIESLSQMLSMGFSDEGGWLTRLLQTKNYDIGAALDTIQYS). A Phosphoserine; by ULK1 and TBK1 modification is found at Ser402. Phosphoserine is present on Ser406. Residues Lys419 and Lys434 each carry the N6-acetyllysine; alternate modification. Lys419 is covalently cross-linked (Glycyl lysine isopeptide (Lys-Gly) (interchain with G-Cter in ubiquitin); alternate). Lys434 is covalently cross-linked (Glycyl lysine isopeptide (Lys-Gly) (interchain with G-Cter in SUMO2); alternate).

Homooligomer or heterooligomer; may form homotypic arrays. Dimerization interferes with ubiquitin binding. Component of a ternary complex with PAWR and PRKCZ. Forms a complex with JUB/Ajuba, PRKCZ and TRAF6. Identified in a complex with TRAF6 and CYLD. Identified in a heterotrimeric complex with ubiquitin and ZFAND5, where ZFAND5 and SQSTM1 both interact with the same ubiquitin molecule. Interacts (via LIR motif) with MAP1LC3A and MAP1LC3B, as well as with other ATG8 family members, including GABARAP, GABARAPL1 and GABARAPL2; these interactions are necessary for the recruitment MAP1 LC3 family members to inclusion bodies containing polyubiquitinated protein aggregates and for their degradation by autophagy. Interacts directly with PRKCI and PRKCZ. Interacts with EBI3, LCK, RASA1, NR2F2, NTRK1, NTRK2, NTRK3, NBR1, MAP2K5 and MAPKAPK5. Upon TNF-alpha stimulation, interacts with RIPK1 probably bridging IKBKB to the TNF-R1 complex composed of TNF-R1/TNFRSF1A, TRADD and RIPK1. Interacts with the proteasome subunits PSMD4 and PSMC2. Interacts with TRAF6. Interacts with 'Lys-63'-linked polyubiquitinated MAPT/TAU. Interacts with FHOD3. Interacts with CYLD. Interacts with SESN1. Interacts with SESN2. Interacts with ULK1. Interacts with UBD. Interacts with WDR81; the interaction is direct and regulates the interaction of SQSTM1 with ubiquitinated proteins. Interacts with WDFY3; this interaction is required to recruit WDFY3 to cytoplasmic bodies and to PML bodies. Interacts with LRRC25. Interacts with STING1; leading to relocalization of STING1 to autophagosomes. Interacts (when phosphorylated at Ser-348) with KEAP1; the interaction is direct and inactivates the BCR(KEAP1) complex by sequestering KEAP1 in inclusion bodies, promoting its degradation. Interacts with MOAP1; promoting dissociation of SQSTM1 inclusion bodies that sequester KEAP1. Interacts with GBP1. Interacts with TAX1BP1. Interacts with (ubiquitinated) PEX5; specifically binds PEX5 ubiquitinated at 'Lys-209' in response to reactive oxygen species (ROS). Interacts (via PB1 domain) with TNS2; the interaction leads to sequestration of TNS2 in cytoplasmic aggregates with SQSTM1 and promotes TNS2 ubiquitination and proteasomal degradation. Interacts with IRS1; the interaction is disrupted by the presence of tensin TNS2. Interacts with TRIM5. Interacts with TRIM11 (when ubiquitinated); promoting AIM2 recruitment to autophagosomes and autophagy-dependent degradation of AIM2. Interacts with TRIM13. Interacts with TRIM16. Interacts with TRIM23. Interacts with TRIM50. Interacts with TRIM55. Interacts with ECSIT; this interaction inhibits TLR4 signaling via functional regulation of the TRAF6-ECSIT complex. Interacts with GABRR1, GABRR2 and GABRR3. Interacts with WDR83. Interacts with GRB2. Interacts with USP12; the interaction is independent of USP12 deubiquitinase activity and may be involved in regulation of autophagic flux. Interacts with ASB6. Phosphorylated. Phosphorylation at Ser-406 by ULK1 destabilizes the UBA dimer interface and increases binding affinity to ubiquitinated proteins. Phosphorylation at Ser-406 also primes for subsequent phosphorylation at Ser-402. Phosphorylation at Ser-402 by CK2 or ULK1 promotes binding to ubiquitinated proteins by increasing the affinity between the UBA domain and polyubiquitin chains. Phosphorylation at Ser-402 by ULK1 is stimulated by SESN2. Phosphorylated at Ser-402 by TBK1, leading to promote relocalization of 'Lys-63'-linked ubiquitinated STING1 to autophagosomes. Phosphorylation at Ser-348 by ULK1 promotes interaction with KEAP1 and inactivation of the BCR(KEAP1) complex, promoting NFE2L2/NRF2 nuclear accumulation and expression of phase II detoxifying enzymes. Phosphorylated in vitro by TTN. Post-translationally, ubiquitinated by UBE2J1 and RNF26 at Lys-434: ubiquitinated SQSTM1 attracts specific vesicle-associated adapters, forming a molecular bridge that restrains cognate vesicles in the perinuclear region and organizes the endosomal pathway for efficient cargo transport. Ubiquitination by UBE2D2 and UBE2D3 increases its ability to bind polyubiquitin chains by destabilizing the UBA dimer interface. Deubiquitination by USP15 releases target vesicles for fast transport into the cell periphery. Ubiquitinated by the BCR(KEAP1) complex at Lys-419, increasing SQSTM1 sequestering activity and promoting its degradation. Ubiquitinated via 'Lys-29' and 'Lys-33'-linked polyubiquitination leading to xenophagic targeting of bacteria and inhibition of their replication. In terms of processing, acetylated at Lys-419 and Lys-434 by KAT5/TIP60, promotes activity by destabilizing the UBA dimer interface and increases binding affinity to ubiquitinated proteins. Deacetylated by HDAC6. Palmitoylation at Cys-288 by ZDHHC19 is required for efficient autophagic degradation of SQSTM1-cargo complexes by promoting affinity for ATG8 proteins and recruitment of p62 bodies to autophagosomes. Dealmitoylated at Cys-288 by LYPLA1. In terms of tissue distribution, ubiquitously expressed. In brain, mainly expressed by neurons, especially pyramidal neurons in the cerebral cortex and hippocampus. Also expressed by Purkinje cells and neurons in the dentate nucleus of the cerebellum and neurons of the basal ganglia (at protein level).

The protein localises to the cytoplasmic vesicle. It localises to the autophagosome. Its subcellular location is the preautophagosomal structure. It is found in the cytoplasm. The protein resides in the cytosol. The protein localises to the nucleus. It localises to the PML body. Its subcellular location is the late endosome. It is found in the lysosome. The protein resides in the endoplasmic reticulum. The protein localises to the myofibril. It localises to the sarcomere. Molecular adapter required for selective macroautophagy (aggrephagy) by acting as a bridge between polyubiquitinated proteins and autophagosomes. Promotes the recruitment of ubiquitinated cargo proteins to autophagosomes via multiple domains that bridge proteins and organelles in different steps. SQSTM1 first mediates the assembly and removal of ubiquitinated proteins by undergoing liquid-liquid phase separation upon binding to ubiquitinated proteins via its UBA domain, leading to the formation of insoluble cytoplasmic inclusions, known as p62 bodies. SQSTM1 then interacts with ATG8 family proteins on autophagosomes via its LIR motif, leading to p62 body recruitment to autophagosomes, followed by autophagic clearance of ubiquitinated proteins. SQSTM1 is itself degraded along with its ubiquitinated cargos. Also required to recruit ubiquitinated proteins to PML bodies in the nucleus. Also involved in autophagy of peroxisomes (pexophagy) in response to reactive oxygen species (ROS) by acting as a bridge between ubiquitinated PEX5 receptor and autophagosomes. Acts as an activator of the NFE2L2/NRF2 pathway via interaction with KEAP1: interaction inactivates the BCR(KEAP1) complex by sequestering the complex in inclusion bodies, promoting nuclear accumulation of NFE2L2/NRF2 and subsequent expression of cytoprotective genes. Promotes relocalization of 'Lys-63'-linked ubiquitinated STING1 to autophagosomes. Involved in endosome organization by retaining vesicles in the perinuclear cloud: following ubiquitination by RNF26, attracts specific vesicle-associated adapters, forming a molecular bridge that restrains cognate vesicles in the perinuclear region and organizes the endosomal pathway for efficient cargo transport. Sequesters tensin TNS2 into cytoplasmic puncta, promoting TNS2 ubiquitination and proteasomal degradation. May regulate the activation of NFKB1 by TNF-alpha, nerve growth factor (NGF) and interleukin-1. May play a role in titin/TTN downstream signaling in muscle cells. Adapter that mediates the interaction between TRAF6 and CYLD. In terms of biological role, more potent than isoform 2 to stimulate PRKCZ-dependent phosphorylation of KCNAB2. This is Sequestosome-1 (Sqstm1) from Rattus norvegicus (Rat).